We begin with the raw amino-acid sequence, 206 residues long: Probable 5-formyltetrahydrofolate cyclo-ligase (206 aa).

Residues 8-12 (KSELR) and arginine 12 each bind ATP. Substrate contacts are provided by residues valine 54, glutamate 59, and 146 to 150 (HGKGY). 143–151 (RCGHGKGYY) contacts ATP. Positions 152 and 188 each coordinate Mg(2+).

Belongs to the 5-formyltetrahydrofolate cyclo-ligase family. Monomer. It depends on Mg(2+) as a cofactor.

The protein resides in the cytoplasm. The catalysed reaction is (6S)-5-formyl-5,6,7,8-tetrahydrofolate + ATP = (6R)-5,10-methenyltetrahydrofolate + ADP + phosphate. Functionally, contributes to tetrahydrofolate metabolism. Helps regulate carbon flow through the folate-dependent one-carbon metabolic network that supplies carbon for the biosynthesis of purines, thymidine and amino acids. Catalyzes the irreversible conversion of 5-formyltetrahydrofolate (5-CHO-H(4)PteGlu) to yield 5,10-methenyltetrahydrofolate. This is Probable 5-formyltetrahydrofolate cyclo-ligase from Caenorhabditis elegans.